We begin with the raw amino-acid sequence, 189 residues long: Protein YOP1 (189 aa).

Topologically, residues 1–35 (MSQIIDQVQAALQNIDKELEKYPALKELEKQIPVP) are cytoplasmic. The helical transmembrane segment at 36-55 (KSYILLGFVGFYFILIFLNI) threads the bilayer. The Lumenal portion of the chain corresponds to 56-57 (GG). Residues 58–78 (IGQLLSNIAGLVIPGYYSLLA) form a helical membrane-spanning segment. The Cytoplasmic segment spans residues 79–88 (LETPGKADDT). A helical membrane pass occupies residues 89-105 (QYLTYWVVFATLNVFEF). The Lumenal segment spans residues 106 to 108 (WSK). The chain crosses the membrane as a helical span at residues 109–127 (AILYWVPFYYLFKTAFLLY). Residues 128–189 (IGLPQYGGAE…PQGHSTGVSH (62 aa)) lie on the Cytoplasmic side of the membrane.

It belongs to the DP1 family. Oligomer.

The protein localises to the endoplasmic reticulum membrane. It is found in the golgi apparatus membrane. In terms of biological role, required to generate and maintain the structure of the tubular endoplasmic reticulum network and the vacuole. Induces high curvature in membranes and causes membrane tubule formation. Involved in membrane/vesicle trafficking. The sequence is that of Protein YOP1 (YOP1) from Yarrowia lipolytica (strain CLIB 122 / E 150) (Yeast).